The primary structure comprises 395 residues: Axin-like protein 1 (395 aa).

An RGS domain is found at 4 to 132 (RSKTFSDRIL…TTTADVSNTW (129 aa)). Positions 190–230 (QETKNSSETEEEKKKERSADPYGSDGFAPPPQSTQTHTLRN) are disordered. The span at 194 to 208 (NSSETEEEKKKERSA) shows a compositional bias: basic and acidic residues. A DIX domain is found at 301-386 (EIQKLTVELR…RITAICRMCP (86 aa)).

In terms of assembly, interacts with bar-1, dsh-2, gsk-3, and mig-5.

Works in parallel with pry-1 in negatively regulating bar-1 signaling in vulval precursor cells and Q neuroblasts. Shown to have a role in excretory cell development. The protein is Axin-like protein 1 (axl-1) of Caenorhabditis briggsae.